A 231-amino-acid polypeptide reads, in one-letter code: 5'-methylthioadenosine/S-adenosylhomocysteine nucleosidase (231 aa).

The Proton acceptor role is filled by E12. Substrate is bound by residues G78, V153, and 174–175 (ME). The active-site Proton donor is D198.

It belongs to the PNP/UDP phosphorylase family. MtnN subfamily.

The enzyme catalyses S-adenosyl-L-homocysteine + H2O = S-(5-deoxy-D-ribos-5-yl)-L-homocysteine + adenine. It catalyses the reaction S-methyl-5'-thioadenosine + H2O = 5-(methylsulfanyl)-D-ribose + adenine. The catalysed reaction is 5'-deoxyadenosine + H2O = 5-deoxy-D-ribose + adenine. Its pathway is amino-acid biosynthesis; L-methionine biosynthesis via salvage pathway; S-methyl-5-thio-alpha-D-ribose 1-phosphate from S-methyl-5'-thioadenosine (hydrolase route): step 1/2. In terms of biological role, catalyzes the irreversible cleavage of the glycosidic bond in both 5'-methylthioadenosine (MTA) and S-adenosylhomocysteine (SAH/AdoHcy) to adenine and the corresponding thioribose, 5'-methylthioribose and S-ribosylhomocysteine, respectively. Also cleaves 5'-deoxyadenosine, a toxic by-product of radical S-adenosylmethionine (SAM) enzymes, into 5-deoxyribose and adenine. In Vibrio cholerae serotype O1 (strain ATCC 39315 / El Tor Inaba N16961), this protein is 5'-methylthioadenosine/S-adenosylhomocysteine nucleosidase.